The following is a 364-amino-acid chain: Large ribosomal subunit protein uL22m (364 aa).

It belongs to the universal ribosomal protein uL22 family. As to quaternary structure, component of the mitochondrial large ribosomal subunit (mt-LSU). Mature N.crassa 74S mitochondrial ribosomes consist of a small (37S) and a large (54S) subunit. The 37S small subunit contains a 16S ribosomal RNA (16S mt-rRNA) and 32 different proteins. The 54S large subunit contains a 23S rRNA (23S mt-rRNA) and 42 different proteins. uL22m forms the wall of the exit tunnel.

The protein localises to the mitochondrion. In terms of biological role, component of the mitochondrial ribosome (mitoribosome), a dedicated translation machinery responsible for the synthesis of mitochondrial genome-encoded proteins, including at least some of the essential transmembrane subunits of the mitochondrial respiratory chain. The mitoribosomes are attached to the mitochondrial inner membrane and translation products are cotranslationally integrated into the membrane. The chain is Large ribosomal subunit protein uL22m (mrpl22) from Neurospora crassa (strain ATCC 24698 / 74-OR23-1A / CBS 708.71 / DSM 1257 / FGSC 987).